The chain runs to 279 residues: Large ribosomal subunit protein uL2 (279 aa).

Disordered stretches follow at residues 1-43 and 207-279; these read MGIK…TAGR and KAGR…PGKH. Polar residues predominate over residues 8-22; that stretch reads PTTNGRRNMTASDFS. Positions 23 to 33 are enriched in basic and acidic residues; that stretch reads EITKTKPEKSL. Polar residues predominate over residues 34-43; that stretch reads LDSQSHTAGR. 2 stretches are compositionally biased toward basic residues: residues 209–219 and 254–279; these read GRTRWQGKRPT and TLGKKTRNKKARSNKLIVRGRRPGKH.

The protein belongs to the universal ribosomal protein uL2 family. Part of the 50S ribosomal subunit. Forms a bridge to the 30S subunit in the 70S ribosome.

Functionally, one of the primary rRNA binding proteins. Required for association of the 30S and 50S subunits to form the 70S ribosome, for tRNA binding and peptide bond formation. It has been suggested to have peptidyltransferase activity; this is somewhat controversial. Makes several contacts with the 16S rRNA in the 70S ribosome. The sequence is that of Large ribosomal subunit protein uL2 from Lactiplantibacillus plantarum (strain ATCC BAA-793 / NCIMB 8826 / WCFS1) (Lactobacillus plantarum).